A 665-amino-acid polypeptide reads, in one-letter code: Intraflagellar transport protein 70A (665 aa).

7 TPR repeats span residues 11 to 44 (DGEFTALVYRLIRDARYAEAVQLLGRELQRSPRS), 45 to 78 (RAGLSLLGYCYYRLQEFALAAECYEQLGQLHPEL), 154 to 187 (TDGQVNLGCLLYKEGQYEAACSKFSATLQASGYQ), 189 to 221 (DLSYNLALAYYSSRQYASALKHIAEIIERGIRQ), 393 to 424 (LTKQVQEARHNRDDEAIKKAVNEYDETMEKYI), 425 to 457 (PVLMAQAKIYWNLENYPMVEKVFRKSVEFCNDH), and 459 to 492 (VWKLNVAHVLFMQENKYKEAIGFYEPIVKKHYDN). Residues 508–535 (YIMTSQNEEAEELMRKIEKEEEQLSYDD) are a coiled coil. The stretch at 544–577 (CIVNLVIGTLYCAKGNYEFGISRVIKSLEPYNKK) is one TPR 8 repeat.

The protein belongs to the TTC30/dfy-1/fleer family.

It is found in the cell projection. Its subcellular location is the cilium. Functionally, required for polyglutamylation of axonemal tubulin. Plays a role in anterograde intraflagellar transport (IFT), the process by which cilia precursors are transported from the base of the cilium to the site of their incorporation at the tip. In Homo sapiens (Human), this protein is Intraflagellar transport protein 70A.